A 221-amino-acid chain; its full sequence is Ras-related protein Rab-27A (221 aa).

N-acetylserine is present on Ser-2. At Ser-2 the chain carries Phosphoserine. 16-24 serves as a coordination point for GTP; it reads GDSGVGKTS. The short motif at 38–46 is the Effector region element; the sequence is FITTVGIDF. GTP-binding positions include 74-78, 133-136, and 163-165; these read DTAGQ, NKSD, and SAA. An intrachain disulfide couples Cys-123 to Cys-188. Positions 202–221 are disordered; the sequence is NGHTSADPLNEEKEKGSCGC. Basic and acidic residues predominate over residues 211–221; sequence NEEKEKGSCGC. 2 S-geranylgeranyl cysteine lipidation sites follow: Cys-219 and Cys-221. Cysteine methyl ester is present on Cys-221.

Belongs to the small GTPase superfamily. Rab family. Binds SYTL1, SLAC2B, MYRIP, SYTL3, SYTL4 and SYTL5. Interacts with RPH3A and RPH3A. Binds MLPH and SYTL2. Interacts with UNC13D. Does not interact with the BLOC-3 complex (heterodimer of HPS1 and HPS4). Interacts (GDP-bound form preferentially) with DENND10.

It is found in the membrane. The protein localises to the melanosome. Its subcellular location is the late endosome. It localises to the lysosome. It carries out the reaction GTP + H2O = GDP + phosphate + H(+). Its activity is regulated as follows. Regulated by guanine nucleotide exchange factors (GEFs) which promote the exchange of bound GDP for free GTP, GTPase activating proteins (GAPs) which increase the GTP hydrolysis activity, and GDP dissociation inhibitors which inhibit the dissociation of the nucleotide from the GTPase. Activated by GEFs such as DENND10. Its function is as follows. Small GTPase which cycles between active GTP-bound and inactive GDP-bound states. In its active state, binds to a variety of effector proteins to regulate homeostasis of late endocytic pathway, including endosomal positioning, maturation and secretion. Plays a role in cytotoxic granule exocytosis in lymphocytes. Required for both granule maturation and granule docking and priming at the immunologic synapse. This is Ras-related protein Rab-27A (RAB27A) from Sus scrofa (Pig).